Here is a 191-residue protein sequence, read N- to C-terminus: Protein Ves (191 aa).

Belongs to the Ves family.

The protein is Protein Ves of Citrobacter koseri (strain ATCC BAA-895 / CDC 4225-83 / SGSC4696).